We begin with the raw amino-acid sequence, 250 residues long: Flavin-dependent thymidylate synthase (250 aa).

The ThyX domain occupies 7 to 233 (LSVELIACSS…PTVFGDFQVE (227 aa)). Residues 92–95 (ELVR), 103–107 (QLSQR), and Arg-172 contribute to the dUMP site. FAD-binding positions include 95-97 (RHR) and Gln-103. The short motif at 95–105 (RHRHFSFSQLS) is the ThyX motif element. FAD contacts are provided by residues 188-190 (NFR) and His-194. Residue Arg-199 coordinates dUMP. Arg-199 serves as the catalytic Involved in ionization of N3 of dUMP, leading to its activation.

It belongs to the thymidylate synthase ThyX family. As to quaternary structure, homotetramer. It depends on FAD as a cofactor.

It catalyses the reaction dUMP + (6R)-5,10-methylene-5,6,7,8-tetrahydrofolate + NADPH + H(+) = dTMP + (6S)-5,6,7,8-tetrahydrofolate + NADP(+). It participates in pyrimidine metabolism; dTTP biosynthesis. In terms of biological role, catalyzes the reductive methylation of 2'-deoxyuridine-5'-monophosphate (dUMP) to 2'-deoxythymidine-5'-monophosphate (dTMP) while utilizing 5,10-methylenetetrahydrofolate (mTHF) as the methyl donor, and NADPH and FADH(2) as the reductant. In Corynebacterium efficiens (strain DSM 44549 / YS-314 / AJ 12310 / JCM 11189 / NBRC 100395), this protein is Flavin-dependent thymidylate synthase.